A 514-amino-acid polypeptide reads, in one-letter code: Maltose/maltodextrin transport system permease protein MalF (514 aa).

Residues 1–16 (MDVIKKKHWWQSDALK) are Cytoplasmic-facing. Residues 17-36 (WSVLGLLGLLVGYLVVLMYA) traverse the membrane as a helical segment. The Periplasmic portion of the chain corresponds to 37-39 (QGE). A helical transmembrane segment spans residues 40–58 (YLFAITTLILSSAGLYIFA). Residues 59-66 (NRKAYAWR) are Cytoplasmic-facing. A helical transmembrane segment spans residues 67–92 (YVYPGMAGMGLFVLFPLVCTIAIAFT). The Periplasmic segment spans residues 93–275 (NYSSTNQLTF…RVFTDEGIQK (183 aa)). A helical membrane pass occupies residues 276 to 306 (PFLAIFVWTVVFSLITVFLTVAVGMVLACLV). The 225-residue stretch at 281-505 (FVWTVVFSLI…LLVGALAIVN (225 aa)) folds into the ABC transmembrane type-1 domain. The Cytoplasmic portion of the chain corresponds to 307-318 (QWEALRGKAVYR). Residues 319 to 336 (VLLILPYAVPSFISILIF) traverse the membrane as a helical segment. The Periplasmic portion of the chain corresponds to 337–369 (KGLFNQSFGEINMMLSALFGVKPAWFSDPTTAR). Residues 370–392 (TMLIIVNTWLGYPYMMILCMGLL) traverse the membrane as a helical segment. The Cytoplasmic portion of the chain corresponds to 393–425 (KAIPDDLYEASAMDGAGPFQNFFKITLPLLIKP). Residues 426–452 (LTPLMIASFAFNFNNFVLIQLLTNGGP) traverse the membrane as a helical segment. Residues 453 to 483 (DRLGTTTPAGYTDLLVNYTYRIAFEGGGGQD) are Periplasmic-facing. The chain crosses the membrane as a helical span at residues 484–505 (FGLAAAIATLIFLLVGALAIVN). The Cytoplasmic portion of the chain corresponds to 506–514 (LKATRMKFD).

The protein belongs to the binding-protein-dependent transport system permease family. MalFG subfamily. The complex is composed of two ATP-binding proteins (MalK), two transmembrane proteins (MalG and MalF) and a solute-binding protein (MalE). Protein stability and stable complex formation require YidC.

It is found in the cell inner membrane. Its function is as follows. Part of the ABC transporter complex MalEFGK involved in maltose/maltodextrin import. Probably responsible for the translocation of the substrate across the membrane. The sequence is that of Maltose/maltodextrin transport system permease protein MalF from Escherichia coli (strain K12).